The primary structure comprises 541 residues: Protopine 6-monooxygenase (541 aa).

Residues 9–29 traverse the membrane as a helical segment; the sequence is LLLNTWISAYSMAALLALVLV. Cys-476 is a binding site for heme.

This sequence belongs to the cytochrome P450 family. Requires heme as cofactor.

It is found in the endoplasmic reticulum membrane. It carries out the reaction protopine + reduced [NADPH--hemoprotein reductase] + O2 = 6-hydroxyprotopine + oxidized [NADPH--hemoprotein reductase] + H2O + H(+). It participates in alkaloid biosynthesis. Functionally, catalyzes the conversion of protopine and allocryptopine to dihydrosanguinarine and dihydrochelerythrine, respectively, in the biosynthesis of isoquinoline alkaloid sanguinarine. This Papaver somniferum (Opium poppy) protein is Protopine 6-monooxygenase (CYP82N3).